A 156-amino-acid chain; its full sequence is Small ribosomal subunit protein bS18c (156 aa).

The interval 1–54 (MYTSKQPFLKSKQPFRKSKQPFRKSKQPFRKFKKPFRKSKQPFRRRPRIGPGDR) is disordered. Positions 13-48 (QPFRKSKQPFRKSKQPFRKFKKPFRKSKQPFRRRPR) are enriched in basic residues.

It belongs to the bacterial ribosomal protein bS18 family. As to quaternary structure, part of the 30S ribosomal subunit.

It is found in the plastid. The protein resides in the chloroplast. The protein is Small ribosomal subunit protein bS18c of Lolium perenne (Perennial ryegrass).